The following is a 723-amino-acid chain: Fatty acid oxidation complex subunit alpha (723 aa).

An enoyl-CoA hydratase/isomerase region spans residues Met1–Asp189. Residue Asp296 coordinates substrate. Residues Asn311–Ile723 are 3-hydroxyacyl-CoA dehydrogenase. Residues Met325, Asp344, Val401 to Glu403, Lys408, and Ser430 each bind NAD(+). Catalysis depends on His451, which acts as the For 3-hydroxyacyl-CoA dehydrogenase activity. Asn454 is a binding site for NAD(+). 2 residues coordinate substrate: Asn501 and Tyr661.

The protein in the N-terminal section; belongs to the enoyl-CoA hydratase/isomerase family. This sequence in the C-terminal section; belongs to the 3-hydroxyacyl-CoA dehydrogenase family. Heterotetramer of two alpha chains (FadB) and two beta chains (FadA).

It carries out the reaction a (3S)-3-hydroxyacyl-CoA + NAD(+) = a 3-oxoacyl-CoA + NADH + H(+). It catalyses the reaction a (3S)-3-hydroxyacyl-CoA = a (2E)-enoyl-CoA + H2O. The catalysed reaction is a 4-saturated-(3S)-3-hydroxyacyl-CoA = a (3E)-enoyl-CoA + H2O. The enzyme catalyses (3S)-3-hydroxybutanoyl-CoA = (3R)-3-hydroxybutanoyl-CoA. It carries out the reaction a (3Z)-enoyl-CoA = a 4-saturated (2E)-enoyl-CoA. It catalyses the reaction a (3E)-enoyl-CoA = a 4-saturated (2E)-enoyl-CoA. The protein operates within lipid metabolism; fatty acid beta-oxidation. Its function is as follows. Involved in the aerobic and anaerobic degradation of long-chain fatty acids via beta-oxidation cycle. Catalyzes the formation of 3-oxoacyl-CoA from enoyl-CoA via L-3-hydroxyacyl-CoA. It can also use D-3-hydroxyacyl-CoA and cis-3-enoyl-CoA as substrate. The protein is Fatty acid oxidation complex subunit alpha of Vibrio vulnificus (strain CMCP6).